Here is a 460-residue protein sequence, read N- to C-terminus: V-type ATP synthase beta chain (460 aa).

The protein belongs to the ATPase alpha/beta chains family.

In terms of biological role, produces ATP from ADP in the presence of a proton gradient across the membrane. The V-type beta chain is a regulatory subunit. The sequence is that of V-type ATP synthase beta chain from Acetivibrio thermocellus (strain ATCC 27405 / DSM 1237 / JCM 9322 / NBRC 103400 / NCIMB 10682 / NRRL B-4536 / VPI 7372) (Clostridium thermocellum).